A 577-amino-acid chain; its full sequence is Arginine--tRNA ligase (577 aa).

A 'HIGH' region motif is present at residues 122-132; it reads PNVAKEMHVGH.

This sequence belongs to the class-I aminoacyl-tRNA synthetase family. In terms of assembly, monomer.

The protein localises to the cytoplasm. The enzyme catalyses tRNA(Arg) + L-arginine + ATP = L-arginyl-tRNA(Arg) + AMP + diphosphate. This chain is Arginine--tRNA ligase, found in Salmonella arizonae (strain ATCC BAA-731 / CDC346-86 / RSK2980).